The chain runs to 361 residues: Cytochrome c peroxidase, mitochondrial (361 aa).

The N-terminal 67 residues, 1–67, are a transit peptide targeting the mitochondrion; sequence MTTAVRLLPS…NWGKAAALAS (67 aa). His119 acts as the Proton acceptor in catalysis. Phosphotyrosine is present on Tyr220. His242 lines the heme b pocket. Trp258 acts as the Tryptophan radical intermediate in catalysis.

It belongs to the peroxidase family. Cytochrome c peroxidase subfamily. As to quaternary structure, forms a one-to-one complex with cytochrome c. Requires heme b as cofactor. Post-translationally, CCP1 precursor is processed by the rhomboid protease PCP1, which cleaves the N-terminal hydrophobic transit peptide. The m-AAA protease (composed of YTA12/RCA1 and YTA10/AFG3) is required for CCP1 maturation: m-AAA protease promotes membrane dislocation of the CCP1 transmembrane segment within the transit peptide to ensure the correct positioning of CCP1 within the membrane bilayer, allowing intramembrane cleavage by PCP1.

It localises to the mitochondrion matrix. It is found in the mitochondrion intermembrane space. It catalyses the reaction 2 Fe(II)-[cytochrome c] + H2O2 + 2 H(+) = 2 Fe(III)-[cytochrome c] + 2 H2O. Functionally, destroys radicals which are normally produced within the cells and which are toxic to biological systems. The chain is Cytochrome c peroxidase, mitochondrial (CCP1) from Saccharomyces cerevisiae (strain ATCC 204508 / S288c) (Baker's yeast).